The primary structure comprises 481 residues: Molybdate-anion transporter (481 aa).

A run of 12 helical transmembrane segments spans residues 1–21 (MFVT…ALEI), 47–67 (LFLK…PYLY), 80–100 (IAIL…VAGW), 131–151 (FMLI…TTTF), 180–200 (WNYG…EWLG), 201–221 (LGPV…AWFV), 276–296 (VMLL…FVFL), 306–326 (PPLG…STLF), 341–361 (LLCL…FSTV), 371–391 (LLAF…VSFL), 403–423 (AVLA…LLAL), and 443–463 (FAGC…LFTV).

The protein belongs to the major facilitator superfamily.

It is found in the cell membrane. Mediates high-affinity intracellular uptake of the rare oligo-element molybdenum. In Danio rerio (Zebrafish), this protein is Molybdate-anion transporter (mfsd5).